The primary structure comprises 160 residues: NADH-quinone oxidoreductase subunit B (160 aa).

[4Fe-4S] cluster contacts are provided by C37, C38, C102, and C132.

This sequence belongs to the complex I 20 kDa subunit family. As to quaternary structure, NDH-1 is composed of 14 different subunits. Subunits NuoB, C, D, E, F, and G constitute the peripheral sector of the complex. [4Fe-4S] cluster is required as a cofactor.

The protein localises to the cell inner membrane. The catalysed reaction is a quinone + NADH + 5 H(+)(in) = a quinol + NAD(+) + 4 H(+)(out). Its function is as follows. NDH-1 shuttles electrons from NADH, via FMN and iron-sulfur (Fe-S) centers, to quinones in the respiratory chain. Couples the redox reaction to proton translocation (for every two electrons transferred, four hydrogen ions are translocated across the cytoplasmic membrane), and thus conserves the redox energy in a proton gradient. The protein is NADH-quinone oxidoreductase subunit B of Neisseria gonorrhoeae (strain NCCP11945).